Here is a 940-residue protein sequence, read N- to C-terminus: SWI/SNF-related matrix-associated actin-dependent regulator of chromatin subfamily A-like protein 1 (940 aa).

A disordered region spans residues 1-155; sequence MSISPLKCPC…GQGHPQASLE (155 aa). Position 2 is an N-acetylserine (S2). 2 mediates interaction with RPA2 regions span residues 2 to 36 and 11 to 36; these read SISPLKCPCLLQRSRGKIEANRQKALARRAEKLLA and LLQRSRGKIEANRQKALARRAEKLLA. A compositionally biased stretch (basic and acidic residues) spans 17–40; it reads GKIEANRQKALARRAEKLLAEQHQ. Residues 18-40 are a coiled coil; sequence KIEANRQKALARRAEKLLAEQHQ. Polar residues-rich tracts occupy residues 41–53 and 68–95; these read KPAQSKQGPSQNL and KQQNPSSSSHGDQRPQNPHSFSPNTSEQ. S125, S131, S153, and S200 each carry phosphoserine. 2 HARP domains span residues 229-299 and 325-396; these read VVGS…QPLE and SLAF…DPLP. The 156-residue stretch at 442-597 folds into the Helicase ATP-binding domain; that stretch reads NFAIAQRGRL…YTQILAVRPT (156 aa). 455–462 contacts ATP; the sequence is DDMGLGKT. The DESH box motif lies at 546–549; sequence DESH. The Nuclear localization signal motif lies at 641–658; the sequence is RRLKGDVLSQLPAKQARW. A disordered region spans residues 662–682; sequence PQARSTPGPEPPWMPPPRMTT. The span at 669–679 shows a compositional bias: pro residues; that stretch reads GPEPPWMPPPR. The 157-residue stretch at 708–864 folds into the Helicase C-terminal domain; the sequence is SIIEYILDLL…ETNFSEMTEA (157 aa). The interval 899–918 is disordered; the sequence is ESFDPGSQDTGDKLDESTLT.

Belongs to the SNF2/RAD54 helicase family. SMARCAL1 subfamily. Interacts with RPA2; the interaction is direct and mediates the recruitment by the RPA complex of SMARCAL1 to sites of DNA damage. In terms of processing, DNA damage-regulated phosphorylation by kinases that may include ATM, ATR and PRKDC. Expressed in mature oocytes, 2-4 cell stage embryos and 8-16 cell stage embryos. Expressed at lower levels in morulae and blastocysts.

Its subcellular location is the nucleus. The enzyme catalyses ATP + H2O = ADP + phosphate + H(+). In terms of biological role, ATP-dependent annealing helicase that binds selectively to fork DNA relative to ssDNA or dsDNA and catalyzes the rewinding of the stably unwound DNA. Rewinds single-stranded DNA bubbles that are stably bound by replication protein A (RPA). Acts throughout the genome to reanneal stably unwound DNA, performing the opposite reaction of many enzymes, such as helicases and polymerases, that unwind DNA. May play an important role in DNA damage response by acting at stalled replication forks. The protein is SWI/SNF-related matrix-associated actin-dependent regulator of chromatin subfamily A-like protein 1 (SMARCAL1) of Bos taurus (Bovine).